A 192-amino-acid chain; its full sequence is Xanthine phosphoribosyltransferase (192 aa).

Positions 20 and 27 each coordinate xanthine. 128-132 (ANGDA) is a 5-phospho-alpha-D-ribose 1-diphosphate binding site. Lys156 provides a ligand contact to xanthine.

It belongs to the purine/pyrimidine phosphoribosyltransferase family. Xpt subfamily. In terms of assembly, homodimer.

The protein localises to the cytoplasm. It carries out the reaction XMP + diphosphate = xanthine + 5-phospho-alpha-D-ribose 1-diphosphate. It functions in the pathway purine metabolism; XMP biosynthesis via salvage pathway; XMP from xanthine: step 1/1. Converts the preformed base xanthine, a product of nucleic acid breakdown, to xanthosine 5'-monophosphate (XMP), so it can be reused for RNA or DNA synthesis. The sequence is that of Xanthine phosphoribosyltransferase from Staphylococcus aureus (strain Mu3 / ATCC 700698).